A 309-amino-acid polypeptide reads, in one-letter code: uncharacterized protein (309 aa).

The tract at residues 272–291 is disordered; it reads PSLDAPSETVEAFPEPQKNL.

This is an uncharacterized protein from Bacillus subtilis (strain 168).